A 285-amino-acid chain; its full sequence is 4-diphosphocytidyl-2-C-methyl-D-erythritol kinase (285 aa).

The active site involves lysine 28. 109 to 119 (PVAAGLGGGSA) provides a ligand contact to ATP. Aspartate 148 is an active-site residue.

It belongs to the GHMP kinase family. IspE subfamily.

The enzyme catalyses 4-CDP-2-C-methyl-D-erythritol + ATP = 4-CDP-2-C-methyl-D-erythritol 2-phosphate + ADP + H(+). Its pathway is isoprenoid biosynthesis; isopentenyl diphosphate biosynthesis via DXP pathway; isopentenyl diphosphate from 1-deoxy-D-xylulose 5-phosphate: step 3/6. Its function is as follows. Catalyzes the phosphorylation of the position 2 hydroxy group of 4-diphosphocytidyl-2C-methyl-D-erythritol. This Novosphingobium aromaticivorans (strain ATCC 700278 / DSM 12444 / CCUG 56034 / CIP 105152 / NBRC 16084 / F199) protein is 4-diphosphocytidyl-2-C-methyl-D-erythritol kinase.